Consider the following 227-residue polypeptide: MTDTAMLPESWRGVLGDELQQPYFKELTEFVEEERARGPVYPPREEVFAALAATPYERVKVLVLGQDPYHGEGQGHGLCFSVRPGVKTPPSLRNIYKEMKEELGTPIPDNGYLMPWAEQGVLLLNAVLTVRSGEANSHKGKGWEKFTDAVIRAVADRPDPAVFVLWGNYAQKKLPLIDEERHVVVKGAHPSPLSAKKFFGSRPFTQINEAVAEQGHTPIDWTIPNLG.

The active-site Proton acceptor is Asp67.

The protein belongs to the uracil-DNA glycosylase (UDG) superfamily. UNG family.

The protein localises to the cytoplasm. It catalyses the reaction Hydrolyzes single-stranded DNA or mismatched double-stranded DNA and polynucleotides, releasing free uracil.. Excises uracil residues from the DNA which can arise as a result of misincorporation of dUMP residues by DNA polymerase or due to deamination of cytosine. The sequence is that of Uracil-DNA glycosylase 2 (ung2) from Streptomyces avermitilis (strain ATCC 31267 / DSM 46492 / JCM 5070 / NBRC 14893 / NCIMB 12804 / NRRL 8165 / MA-4680).